The primary structure comprises 260 residues: Cell division protein FtsQ (260 aa).

Over 1–26 (MINKVLLEGQRITRSPQVKQHACGAS) the chain is Cytoplasmic. The chain crosses the membrane as a helical span at residues 27-47 (FFLVVLLLIGGLLYSTISWMW). Topologically, residues 48–260 (DEQRLPLSKL…QELTQEKNDD (213 aa)) are periplasmic. Residues 52 to 122 (LPLSKLVLQG…DTIKVYLTEY (71 aa)) enclose the POTRA domain.

This sequence belongs to the FtsQ/DivIB family. FtsQ subfamily. Part of a complex composed of FtsB, FtsL and FtsQ.

It is found in the cell inner membrane. Its function is as follows. Essential cell division protein. May link together the upstream cell division proteins, which are predominantly cytoplasmic, with the downstream cell division proteins, which are predominantly periplasmic. May control correct divisome assembly. This is Cell division protein FtsQ from Vibrio cholerae serotype O1 (strain ATCC 39315 / El Tor Inaba N16961).